Reading from the N-terminus, the 215-residue chain is Probable GTP-binding protein EngB (215 aa).

The EngB-type G domain occupies 26–200; the sequence is EGIEVAFAGR…RAKLDEWFAP (175 aa). GTP contacts are provided by residues 34 to 41, 61 to 65, 79 to 82, 146 to 149, and 179 to 181; these read GRSNAGKS, GRTQL, DLPG, TKAD, and FSS. Residues serine 41 and threonine 63 each coordinate Mg(2+).

Belongs to the TRAFAC class TrmE-Era-EngA-EngB-Septin-like GTPase superfamily. EngB GTPase family. Mg(2+) is required as a cofactor.

Its function is as follows. Necessary for normal cell division and for the maintenance of normal septation. This Aliivibrio fischeri (strain MJ11) (Vibrio fischeri) protein is Probable GTP-binding protein EngB.